The primary structure comprises 80 residues: Large ribosomal subunit protein uL24 (80 aa).

The protein belongs to the universal ribosomal protein uL24 family. As to quaternary structure, part of the 50S ribosomal subunit.

One of two assembly initiator proteins, it binds directly to the 5'-end of the 23S rRNA, where it nucleates assembly of the 50S subunit. Functionally, one of the proteins that surrounds the polypeptide exit tunnel on the outside of the subunit. This Chlorobium phaeobacteroides (strain BS1) protein is Large ribosomal subunit protein uL24.